The primary structure comprises 234 residues: Ribonuclease HII (234 aa).

Residues A16–I207 enclose the RNase H type-2 domain. Residues D22, E23, and D115 each coordinate a divalent metal cation.

This sequence belongs to the RNase HII family. Mn(2+) is required as a cofactor. It depends on Mg(2+) as a cofactor.

It localises to the cytoplasm. The enzyme catalyses Endonucleolytic cleavage to 5'-phosphomonoester.. Endonuclease that specifically degrades the RNA of RNA-DNA hybrids. The sequence is that of Ribonuclease HII from Xylella fastidiosa (strain M12).